A 174-amino-acid chain; its full sequence is Shikimate kinase 2 (174 aa).

Position 12 to 17 (G12 to T17) interacts with ATP. Residues T16 and D32 each coordinate Mg(2+). Residues D34, R58, and G79 each coordinate substrate. The segment at R112–K126 is LID domain. R120 contributes to the ATP binding site. R139 provides a ligand contact to substrate. An ATP-binding site is contributed by Q155.

The protein belongs to the shikimate kinase family. AroL subfamily. As to quaternary structure, monomer. Mg(2+) serves as cofactor.

It is found in the cytoplasm. The catalysed reaction is shikimate + ATP = 3-phosphoshikimate + ADP + H(+). The protein operates within metabolic intermediate biosynthesis; chorismate biosynthesis; chorismate from D-erythrose 4-phosphate and phosphoenolpyruvate: step 5/7. Catalyzes the specific phosphorylation of the 3-hydroxyl group of shikimic acid using ATP as a cosubstrate. The sequence is that of Shikimate kinase 2 from Sodalis glossinidius (strain morsitans).